Reading from the N-terminus, the 197-residue chain is HTH-type transcriptional regulator BetI (197 aa).

The HTH tetR-type domain maps to 8-68 (PIRRSQLIHA…ATMRHLLSAL (61 aa)). The segment at residues 31–50 (SIALIARLAGVSNGIISHYF) is a DNA-binding region (H-T-H motif).

It functions in the pathway amine and polyamine biosynthesis; betaine biosynthesis via choline pathway [regulation]. Its function is as follows. Repressor involved in the biosynthesis of the osmoprotectant glycine betaine. It represses transcription of the choline transporter BetT and the genes of BetAB involved in the synthesis of glycine betaine. In Pseudomonas aeruginosa (strain LESB58), this protein is HTH-type transcriptional regulator BetI.